A 173-amino-acid polypeptide reads, in one-letter code: Photosystem I assembly protein Ycf3 (173 aa).

3 TPR repeats span residues 35 to 68 (AYIY…EENK), 72 to 105 (GETL…NPKQ), and 120 to 153 (GRNA…YPGG).

Belongs to the Ycf3 family.

Its subcellular location is the cellular thylakoid membrane. Functionally, essential for the assembly of the photosystem I (PSI) complex. May act as a chaperone-like factor to guide the assembly of the PSI subunits. This chain is Photosystem I assembly protein Ycf3, found in Prochlorococcus marinus (strain MIT 9312).